Reading from the N-terminus, the 718-residue chain is Polyribonucleotide nucleotidyltransferase (718 aa).

D493 and D499 together coordinate Mg(2+). In terms of domain architecture, KH spans 560–619 (PRMITIKINPEKIRDVIGKGGSVIRALTEETGTTIDISDDGVVTIASTSSEGMAEAKKRI). The 69-residue stretch at 629–697 (GQVYEGTVLK…EKGRVRLSAK (69 aa)) folds into the S1 motif domain.

This sequence belongs to the polyribonucleotide nucleotidyltransferase family. It depends on Mg(2+) as a cofactor.

It localises to the cytoplasm. The enzyme catalyses RNA(n+1) + phosphate = RNA(n) + a ribonucleoside 5'-diphosphate. Functionally, involved in mRNA degradation. Catalyzes the phosphorolysis of single-stranded polyribonucleotides processively in the 3'- to 5'-direction. The chain is Polyribonucleotide nucleotidyltransferase from Paraburkholderia phytofirmans (strain DSM 17436 / LMG 22146 / PsJN) (Burkholderia phytofirmans).